A 323-amino-acid chain; its full sequence is Voltage-dependent calcium channel gamma-2 subunit (323 aa).

A helical transmembrane segment spans residues 10–30 (MLLTTVGAFAAFSLMTIAVGT). Asn48 carries N-linked (GlcNAc...) asparagine glycosylation. The next 3 membrane-spanning stretches (helical) occupy residues 104–124 (SSIF…CIAA), 134–154 (IILS…IGII), and 182–202 (FGAL…HMFI). The segment at 233 to 261 (YQRRSRSSSRSTEPSHSRDASPVGIKGFN) is disordered. Ser253 bears the Phosphoserine mark. A Phosphotyrosine modification is found at Tyr271. Phosphothreonine is present on Thr321.

It belongs to the PMP-22/EMP/MP20 family. CACNG subfamily. As to quaternary structure, the L-type calcium channel is composed of five subunits: alpha-1, alpha-2/delta, beta and gamma. Interacts with the PDZ domains of DLG4/PSD-95 and DLG1/SAP97. May interact with GOPC. Acts as an auxiliary subunit for AMPA-selective glutamate receptors (AMPARs). Found in a complex with GRIA1, GRIA2, GRIA3, GRIA4, CNIH2, CNIH3, CACNG3, CACNG4, CACNG5, CACNG7 and CACNG8. Interacts with GRIA1 and GRIA2. Interacts with MPP2. Post-translationally, phosphorylation of Thr-321 impairs interaction with DLG1 and DLG4. As to expression, brain.

Its subcellular location is the membrane. The protein resides in the synapse. The protein localises to the synaptosome. Regulates the trafficking and gating properties of AMPA-selective glutamate receptors (AMPARs). Promotes their targeting to the cell membrane and synapses and modulates their gating properties by slowing their rates of activation, deactivation and desensitization. Does not show subunit-specific AMPA receptor regulation and regulates all AMPAR subunits. Thought to stabilize the calcium channel in an inactivated (closed) state. This is Voltage-dependent calcium channel gamma-2 subunit (CACNG2) from Homo sapiens (Human).